The primary structure comprises 1309 residues: Target of rapamycin complex 2 subunit ste20 (1309 aa).

One can recognise an REM-1 domain in the interval 24 to 110; the sequence is DFIKKMNTTD…IESFQGENGE (87 aa). Residues 105-128 are disordered; that stretch reads QGENGEAKTGSTSLTRSASATVSR. The span at 113–128 shows a compositional bias: polar residues; it reads TGSTSLTRSASATVSR. Ser151 carries the post-translational modification Phosphoserine. Positions 183–205 are disordered; it reads NVNEKNNSSSEDTQPNGKRPSSL. A compositionally biased stretch (polar residues) spans 194-205; the sequence is DTQPNGKRPSSL. 6 consecutive transmembrane segments (helical) span residues 285 to 305, 392 to 412, 504 to 524, 564 to 584, 926 to 946, and 984 to 1004; these read LFLD…WILS, LIDG…LVYL, VIDL…ESFL, TAVL…VCMI, LNHW…LEVC, and LLLR…INFI. Thr1203 is modified (phosphothreonine).

This sequence belongs to the RICTOR family. As to quaternary structure, the target of rapamycin complex 2 (TORC2) is composed of at least bit61, pop3/wat1, sin1, ste20 and tor1. Post-translationally, either Ser-203 or Ser-204 are phosphorylated as well.

It localises to the membrane. In terms of biological role, component of TORC2, which regulates multiple cellular processes to control cell growth in response to environmental signals. TORC2 is required for cell survival under various stress conditions. TORC2 positively controls G1 cell-cycle arrest, sexual development and amino acid uptake. Positively regulates amino acid uptake through the control of expression of amino acid permeases. This chain is Target of rapamycin complex 2 subunit ste20, found in Schizosaccharomyces pombe (strain 972 / ATCC 24843) (Fission yeast).